The following is a 98-amino-acid chain: Small ribosomal subunit protein bS18c (98 aa).

Over residues 1–13 (MSKQSFDFKRYKP) the composition is skewed to basic and acidic residues. A disordered region spans residues 1-26 (MSKQSFDFKRYKPEAPSGSRKRPLKK).

The protein belongs to the bacterial ribosomal protein bS18 family. Part of the 30S ribosomal subunit.

Its subcellular location is the plastid. It localises to the chloroplast. The polypeptide is Small ribosomal subunit protein bS18c (Gnetum parvifolium (Small-leaved jointfir)).